A 450-amino-acid chain; its full sequence is Cysteine protease ATG4C (450 aa).

Catalysis depends on Cys112, which acts as the Nucleophile. Residues Asp336 and His338 contribute to the active site.

It belongs to the peptidase C54 family.

The protein resides in the cytoplasm. It catalyses the reaction [protein]-C-terminal L-amino acid-glycyl-phosphatidylethanolamide + H2O = [protein]-C-terminal L-amino acid-glycine + a 1,2-diacyl-sn-glycero-3-phosphoethanolamine. Functionally, cysteine protease that plays a key role in autophagy by mediating both proteolytic activation and delipidation of ATG8 family proteins. The protease activity is required for proteolytic activation of ATG8 family proteins: cleaves the C-terminal amino acid of ATG8 proteins to reveal a C-terminal glycine. Exposure of the glycine at the C-terminus is essential for ATG8 proteins conjugation to phosphatidylethanolamine (PE) and insertion to membranes, which is necessary for autophagy. In addition to the protease activity, also mediates delipidation of ATG8 family proteins. Catalyzes delipidation of PE-conjugated forms of ATG8 proteins during macroautophagy. The polypeptide is Cysteine protease ATG4C (Xenopus laevis (African clawed frog)).